We begin with the raw amino-acid sequence, 267 residues long: Phosphonoacetaldehyde hydrolase (267 aa).

The active-site Nucleophile is the aspartate 10. Residues aspartate 10 and alanine 12 each contribute to the Mg(2+) site. Lysine 51 serves as the catalytic Schiff-base intermediate with substrate. Aspartate 184 is a binding site for Mg(2+).

It belongs to the HAD-like hydrolase superfamily. PhnX family. In terms of assembly, homodimer. It depends on Mg(2+) as a cofactor.

It carries out the reaction phosphonoacetaldehyde + H2O = acetaldehyde + phosphate + H(+). In terms of biological role, involved in phosphonate degradation. The polypeptide is Phosphonoacetaldehyde hydrolase (Paraburkholderia phytofirmans (strain DSM 17436 / LMG 22146 / PsJN) (Burkholderia phytofirmans)).